A 226-amino-acid chain; its full sequence is ATP synthase F(0) complex subunit a (226 aa).

6 helical membrane-spanning segments follow: residues 6–26 (FASF…IVLF), 68–88 (WTLM…LGLL), 97–117 (QLSM…ITGF), 138–158 (IPML…ALAV), 164–184 (ITAG…LMSI), and 200–222 (TILE…SLYL).

The protein belongs to the ATPase A chain family. As to quaternary structure, component of the ATP synthase complex composed at least of ATP5F1A/subunit alpha, ATP5F1B/subunit beta, ATP5MC1/subunit c (homooctomer), MT-ATP6/subunit a, MT-ATP8/subunit 8, ATP5ME/subunit e, ATP5MF/subunit f, ATP5MG/subunit g, ATP5MK/subunit k, ATP5MJ/subunit j, ATP5F1C/subunit gamma, ATP5F1D/subunit delta, ATP5F1E/subunit epsilon, ATP5PF/subunit F6, ATP5PB/subunit b, ATP5PD/subunit d, ATP5PO/subunit OSCP. ATP synthase complex consists of a soluble F(1) head domain (subunits alpha(3) and beta(3)) - the catalytic core - and a membrane F(0) domain - the membrane proton channel (subunits c, a, 8, e, f, g, k and j). These two domains are linked by a central stalk (subunits gamma, delta, and epsilon) rotating inside the F1 region and a stationary peripheral stalk (subunits F6, b, d, and OSCP). Interacts with DNAJC30; interaction is direct.

Its subcellular location is the mitochondrion inner membrane. It carries out the reaction H(+)(in) = H(+)(out). Subunit a, of the mitochondrial membrane ATP synthase complex (F(1)F(0) ATP synthase or Complex V) that produces ATP from ADP in the presence of a proton gradient across the membrane which is generated by electron transport complexes of the respiratory chain. ATP synthase complex consist of a soluble F(1) head domain - the catalytic core - and a membrane F(1) domain - the membrane proton channel. These two domains are linked by a central stalk rotating inside the F(1) region and a stationary peripheral stalk. During catalysis, ATP synthesis in the catalytic domain of F(1) is coupled via a rotary mechanism of the central stalk subunits to proton translocation. With the subunit c (ATP5MC1), forms the proton-conducting channel in the F(0) domain, that contains two crucial half-channels (inlet and outlet) that facilitate proton movement from the mitochondrial intermembrane space (IMS) into the matrix. Protons are taken up via the inlet half-channel and released through the outlet half-channel, following a Grotthuss mechanism. The protein is ATP synthase F(0) complex subunit a of Bos mutus grunniens (Wild yak).